A 124-amino-acid polypeptide reads, in one-letter code: Small ribosomal subunit protein bS6 (124 aa).

The segment at 96 to 124 (ETGPSPMMKEVQREEAKKAAAAQPAEAQA) is disordered. A compositionally biased stretch (low complexity) spans 114–124 (AAAAQPAEAQA).

It belongs to the bacterial ribosomal protein bS6 family.

Functionally, binds together with bS18 to 16S ribosomal RNA. This Burkholderia orbicola (strain MC0-3) protein is Small ribosomal subunit protein bS6.